A 369-amino-acid polypeptide reads, in one-letter code: MNDETTPANKNPEKAELRCGWTTGACATAATKAALTALITGEFPDPVGIILPKGEVPYFQLAYEGLGEGYAMAGIVKDAGDDPDVTHGATIISTVYPAPPGTGIIFRAGEGVGTVTREGLAIPTPGEAAINPVPRRMMTEICEAICAEYGLPADLVITISVPGGEEIAQKTWNPRLGIIGGISILGTTGVVHPFSCSAWIHSIHRGIDVARAAGQKHVLGATGSTSEDAAQALYNLPDFAILDMGDFAGGVLKYLREHPIDRLTIAGGFAKLTKLAQGALDLHSSRSQVDKGFLWQIAERAGAPADMKERILLANTAMEVLELTQSIGIDIAGPIALEARQTALKTLRGAPVEVEIIVTDRKGNILARV.

It belongs to the CbiD family.

It carries out the reaction Co-precorrin-5B + S-adenosyl-L-methionine = Co-precorrin-6A + S-adenosyl-L-homocysteine. Its pathway is cofactor biosynthesis; adenosylcobalamin biosynthesis; cob(II)yrinate a,c-diamide from sirohydrochlorin (anaerobic route): step 6/10. Functionally, catalyzes the methylation of C-1 in cobalt-precorrin-5B to form cobalt-precorrin-6A. The sequence is that of Cobalt-precorrin-5B C(1)-methyltransferase from Brucella melitensis biotype 2 (strain ATCC 23457).